Here is a 545-residue protein sequence, read N- to C-terminus: Cytosolic Fe-S cluster assembly factor NAR1 (545 aa).

Cys-20, Cys-74, Cys-77, Cys-80, Cys-188, Cys-243, Cys-454, and Cys-458 together coordinate [4Fe-4S] cluster.

This sequence belongs to the NARF family.

Component of the cytosolic Fe/S protein assembly machinery. Required for maturation of extramitochondrial Fe/S proteins. May play a role in the transfer of pre-assembled Fe/S clusters to target apoproteins. The sequence is that of Cytosolic Fe-S cluster assembly factor NAR1 (NAR1) from Scheffersomyces stipitis (strain ATCC 58785 / CBS 6054 / NBRC 10063 / NRRL Y-11545) (Yeast).